Here is a 286-residue protein sequence, read N- to C-terminus: D-tagatose-1,6-bisphosphate aldolase subunit KbaY (286 aa).

D82 serves as the catalytic Proton donor. Zn(2+) is bound by residues H83 and H180. G181 lines the dihydroxyacetone phosphate pocket. H208 serves as a coordination point for Zn(2+). Residues 209–211 and 230–233 contribute to the dihydroxyacetone phosphate site; these read GAS and NVAT.

Belongs to the class II fructose-bisphosphate aldolase family. TagBP aldolase KbaY subfamily. Homotetramer. Forms a complex with KbaZ. The cofactor is Zn(2+).

The enzyme catalyses D-tagatofuranose 1,6-bisphosphate = D-glyceraldehyde 3-phosphate + dihydroxyacetone phosphate. It functions in the pathway carbohydrate metabolism; D-tagatose 6-phosphate degradation; D-glyceraldehyde 3-phosphate and glycerone phosphate from D-tagatose 6-phosphate: step 2/2. Functionally, catalytic subunit of the tagatose-1,6-bisphosphate aldolase KbaYZ, which catalyzes the reversible aldol condensation of dihydroxyacetone phosphate (DHAP or glycerone-phosphate) with glyceraldehyde 3-phosphate (G3P) to produce tagatose 1,6-bisphosphate (TBP). Requires KbaZ subunit for full activity and stability. In Escherichia coli O45:K1 (strain S88 / ExPEC), this protein is D-tagatose-1,6-bisphosphate aldolase subunit KbaY.